A 653-amino-acid chain; its full sequence is Aspartate--tRNA ligase, mitochondrial (653 aa).

The transit peptide at 1–46 (MYLGFWLSRLCRGLSRPIGKTMRPIWGSLSRNLALSSQRIPEFSSF) directs the protein to the mitochondrion. Thr-218 bears the Phosphothreonine mark. Ser-241 is modified (phosphoserine). The segment at 243 to 246 (QQFK) is aspartate. Arg-265 serves as a coordination point for L-aspartate. Residues 265–267 (RDE) and Glu-534 each bind ATP. L-aspartate is bound at residue Arg-541. 583 to 586 (GLDR) provides a ligand contact to ATP.

This sequence belongs to the class-II aminoacyl-tRNA synthetase family. Type 1 subfamily. As to quaternary structure, homodimer.

It localises to the mitochondrion matrix. Its subcellular location is the mitochondrion membrane. The enzyme catalyses tRNA(Asp) + L-aspartate + ATP = L-aspartyl-tRNA(Asp) + AMP + diphosphate. Its function is as follows. Catalyzes the attachment of aspartate to tRNA(Asp) in a two-step reaction: aspartate is first activated by ATP to form Asp-AMP and then transferred to the acceptor end of tRNA(Asp). In Mus musculus (Mouse), this protein is Aspartate--tRNA ligase, mitochondrial (Dars2).